A 168-amino-acid chain; its full sequence is MRGFIIGRFQPFHKGHLEVIKKIAEEVDEIIIGIGSAQKSHTLENPFTAGERILMITQSLKDYDLTYYPIPIKDIEFNSIWVSYVESLTPPFDIVYSGNPLVRVLFEERGYEVKRPEMFNRKEYSGTEIRRRMLNGEKWEHLVPKAVVDVIKEIKGVERLRKLAQTDK.

ATP-binding residues include Arg8, Phe9, His13, His16, Phe119, Arg121, Tyr124, Gly126, Thr127, and Arg130.

This sequence belongs to the archaeal NMN adenylyltransferase family. In terms of assembly, homohexamer existing as a trimer of dimers.

It is found in the cytoplasm. The enzyme catalyses beta-nicotinamide D-ribonucleotide + ATP + H(+) = diphosphate + NAD(+). It participates in cofactor biosynthesis; NAD(+) biosynthesis; NAD(+) from nicotinamide D-ribonucleotide: step 1/1. Functionally, catalyzes the formation of NAD(+) from nicotinamide mononucleotide (NMN) and ATP. This is Nicotinamide-nucleotide adenylyltransferase from Methanocaldococcus jannaschii (strain ATCC 43067 / DSM 2661 / JAL-1 / JCM 10045 / NBRC 100440) (Methanococcus jannaschii).